The sequence spans 989 residues: Voltage-gated delayed rectifier potassium channel KCNH1 (989 aa).

Residues methionine 1–tryptophan 220 lie on the Cytoplasmic side of the membrane. Residues glutamine 14–serine 94 form the PAS domain. The region spanning asparagine 93–cysteine 145 is the PAC domain. Residues phenylalanine 151 to arginine 162 form a required for phosphatidylinositol bisphosphate binding region. A helical transmembrane segment spans residues aspartate 221–phenylalanine 241. Residues lysine 242–valine 248 are Extracellular-facing. The chain crosses the membrane as a helical span at residues alanine 249 to phenylalanine 269. The Cytoplasmic segment spans residues histidine 270–asparagine 290. Residues tyrosine 291–isoleucine 309 traverse the membrane as a helical segment. The Extracellular portion of the chain corresponds to asparagine 310–glycine 345. The helical; Voltage-sensor transmembrane segment at isoleucine 346–leucine 368 threads the bilayer. Residues aspartate 369–alanine 377 lie on the Cytoplasmic side of the membrane. A helical membrane pass occupies residues valine 378–serine 399. Topologically, residues isoleucine 400–serine 448 are extracellular. N-linked (GlcNAc...) asparagine glycosylation is found at asparagine 415 and asparagine 433. Positions valine 449–alanine 470 form an intramembrane region, pore-forming. A Selectivity filter motif is present at residues serine 463–asparagine 468. The Extracellular portion of the chain corresponds to proline 471–lysine 477. A helical transmembrane segment spans residues isoleucine 478 to valine 498. Residues threonine 499–serine 989 are Cytoplasmic-facing. Positions lysine 673–asparagine 770 are calmodulin-binding. An interaction with cyclic nucleotide-binding pocket region spans residues tyrosine 699–leucine 701. 2 stretches are compositionally biased toward basic and acidic residues: residues glutamate 857–serine 879 and serine 887–glutamine 901. 2 disordered regions span residues glutamate 857–proline 905 and arginine 961–serine 989. The interval alanine 924–alanine 964 is CAD (involved in subunit assembly). The segment covering glycine 962–proline 979 has biased composition (polar residues). Serine 974, serine 978, and serine 981 each carry phosphoserine. Positions glutamate 980–serine 989 are enriched in basic and acidic residues.

This sequence belongs to the potassium channel family. H (Eag) (TC 1.A.1.20) subfamily. Kv10.1/KCNH1 sub-subfamily. As to quaternary structure, homomultimer. The potassium channel is composed of a homo- or heterotetrameric complex of pore-forming alpha subunits that can associate with modulating beta subunits. Heteromultimer with KCNH5/EAG2. Interacts with ALG10B. Interacts with RABEP1. Interacts (via C-terminus) with CTTN. Interacts (via C-terminal cytoplasmic region) with Ca(2+)-bound calmodulin. In terms of processing, channel activity is regulated via tyrosine phosphorylation/dephosphorylation by SRC and PTPN6. Detected in brain (at protein level). Highly expressed in olfactory bulb. Detected in brain cortex, hippocampus, brain stem, striatum, thalamus, hypothalamus and spinal cord.

The protein localises to the cell membrane. It localises to the nucleus inner membrane. It is found in the cell projection. The protein resides in the dendrite. Its subcellular location is the axon. The protein localises to the presynaptic cell membrane. It localises to the perikaryon. It is found in the postsynaptic density membrane. The protein resides in the early endosome membrane. It carries out the reaction K(+)(in) = K(+)(out). Channel activity is inhibited by interaction with Ca(2+)-bound calmodulin. Interaction of a single pore-forming alpha subunit with a calmodulin chain is sufficient to promote channel closure. Channel activity is not regulated by cyclic nucleotides. Channel activity is inhibited by binding intracellular phosphatidylinositol-3,5-bisphosphate and phosphatidylinositol-4,5-bisphosphate (PIP2), but is not inhibited by phosphatidylinositol 4-phosphate. In terms of biological role, pore-forming (alpha) subunit of a voltage-gated delayed rectifier potassium channel that mediates outward-rectifying potassium currents which, on depolarization, reaches a steady-state level and do not inactivate. The activation kinetics depend on the prepulse potential and external divalent cation concentration. With negative prepulses, the current activation is delayed and slowed down several fold, whereas more positive prepulses speed up activation. The time course of activation is biphasic with a fast and a slowly activating current component. Activates at more positive membrane potentials and exhibit a steeper activation curve. Channel properties are modulated by subunit assembly. Mediates IK(NI) current in myoblasts. Involved in the regulation of cell proliferation and differentiation, in particular adipogenic and osteogenic differentiation in bone marrow-derived mesenchymal stem cells (MSCs). The chain is Voltage-gated delayed rectifier potassium channel KCNH1 from Mus musculus (Mouse).